The chain runs to 486 residues: Inosine-5'-monophosphate dehydrogenase (486 aa).

CBS domains are found at residues Ile99–Glu154 and Met156–Glu215. NAD(+) is bound by residues Asp247 and Gly294–Gly296. K(+) is bound by residues Gly296 and Gly298. Ser299 serves as a coordination point for IMP. A K(+)-binding site is contributed by Cys301. The active-site Thioimidate intermediate is the Cys301. IMP is bound by residues Asp334 to Gly336, Gly357 to Asn358, and Tyr381 to Gly385. Arg397 (proton acceptor) is an active-site residue. Glu412 provides a ligand contact to IMP. Residues Glu466, Ser467, and His468 each coordinate K(+).

This sequence belongs to the IMPDH/GMPR family. In terms of assembly, homotetramer. K(+) is required as a cofactor.

It catalyses the reaction IMP + NAD(+) + H2O = XMP + NADH + H(+). The protein operates within purine metabolism; XMP biosynthesis via de novo pathway; XMP from IMP: step 1/1. Its activity is regulated as follows. Mycophenolic acid (MPA) is a non-competitive inhibitor that prevents formation of the closed enzyme conformation by binding to the same site as the amobile flap. In contrast, mizoribine monophosphate (MZP) is a competitive inhibitor that induces the closed conformation. MPA is a potent inhibitor of mammalian IMPDHs but a poor inhibitor of the bacterial enzymes. MZP is a more potent inhibitor of bacterial IMPDH. Its function is as follows. Catalyzes the conversion of inosine 5'-phosphate (IMP) to xanthosine 5'-phosphate (XMP), the first committed and rate-limiting step in the de novo synthesis of guanine nucleotides, and therefore plays an important role in the regulation of cell growth. The polypeptide is Inosine-5'-monophosphate dehydrogenase (Pyrococcus horikoshii (strain ATCC 700860 / DSM 12428 / JCM 9974 / NBRC 100139 / OT-3)).